The sequence spans 962 residues: Thrombospondin-3a (962 aa).

The signal sequence occupies residues 1–23; sequence MEQMFVHIWVSLVVLMSVWSAQS. The region spanning 24-196 is the Laminin G-like domain; that stretch reads DKKQDVPVID…MDTLKLALGG (173 aa). Residues 277–318 enclose the EGF-like 1 domain; sequence PRSRCQPNPCFKGVSCMETFEYPGYRCGPCPDGMTGNGTHCQ. 20 cysteine pairs are disulfide-bonded: C281/C292, C286/C303, C306/C317, C323/C335, C329/C344, C347/C371, C377/C390, C384/C399, C402/C414, C420/C434, C428/C444, C446/C457, C473/C480, C485/C505, C521/C541, C544/C564, C580/C600, C603/C623, C641/C661, and C684/C704. N-linked (GlcNAc...) asparagine glycosylation is present at N313. In terms of domain architecture, EGF-like 2; calcium-binding spans 319-358; the sequence is DIDECSEAQPCYTPGACVNTARGFTCESCPPGMWGPPLSG. The EGF-like 3; calcium-binding domain occupies 373–412; it reads DIDECVDLANACTPNSVCINIIGSFRCGQCKTGYVGNQTA. N409 carries an N-linked (GlcNAc...) asparagine glycan. In terms of domain architecture, EGF-like 4 spans 416–458; that stretch reads PRKSCSSLSFNPCDANAHCVMQRNGDVSCACNVGWAGNGHTCG. TSP type-3 repeat units follow at residues 459–493, 494–529, 530–552, 553–588, 589–611, 612–649, 650–692, and 693–728; these read KDTD…NSGQ, EDAD…NKDQ, QNSD…NIDQ, KDTD…NPMQ, TDRD…NPMQ, TDVD…NSSQ, LDSD…NPNQ, and KDSD…EVTL. Positions 548–704 are disordered; the sequence is PNIDQKDTDS…SDSNGVGDVC (157 aa). Over residues 557–570 the composition is skewed to acidic residues; it reads SNGEGDACDDDIDG. The span at 631–641 shows a compositional bias: basic and acidic residues; it reads GDGHQDTRDNC. Residue N646 is glycosylated (N-linked (GlcNAc...) asparagine). The segment covering 652 to 669 has biased composition (acidic residues); that stretch reads SDNDGIGDDCDEDDDNDG. Residue N710 is glycosylated (N-linked (GlcNAc...) asparagine). C720 and C941 form a disulfide bridge. The region spanning 732–946 is the TSP C-terminal domain; that stretch reads RAYQTVILDP…LRYRCNDTVP (215 aa). The N-linked (GlcNAc...) asparagine glycan is linked to N942.

The protein belongs to the thrombospondin family. As to quaternary structure, oligomer; disulfide-linked.

Adhesive glycoprotein that mediates cell-to-cell and cell-to-matrix interactions. Can bind to fibrinogen, fibronectin, laminin and type V collagen. This Danio rerio (Zebrafish) protein is Thrombospondin-3a (thbs3a).